We begin with the raw amino-acid sequence, 1065 residues long: MFDRQYPTVHDLYIPFPVFQSRLEQPFDTTVTSIRELRTISSQSTVYGYDLTVNDPLYYDLEPLLGNSISLTLDPKLTDSERLDAVYLDINNRLANCHGDLLRKFSATSYSIDTSVIPYVFLPMYRYLLHIMTGSAFNSLFRQMIVNVDANCANADESLLTSAQHLFALLNKINPSRQLPAPLRHILINATIADVPYDMQGKFVPYNVVFLPTSNESLRDATIARIREPAGYHPRPSIVVPHYFVFRSTTDALCRFMYLAKRTFLHVNDKTATHTSVRRCELLRLNFPLDQSFAQLSLLVQLQLPLSTLSIQRLPHLSTTVNQLITLASSSYSEQAIINLLRVNWNVIGYIELSTLGEPSLPAIRVYDFTSSMNTRSVTQGPNVQIRTRSNAIDVHVREFIRFGRYLPLEIPKCRVPRLVSLQVINYSLNHLLSVTPWPDQYDVTRHRPERIIENSVKRTIQYQEYDPSVGTWATSSDMTNYTHIPSDSYYHQFIVTCLRSFCGLRDLPRENSARYPYVVLLYGLALGHEIAPSRMGLTYAMTSHMISYVLSTITTGIDVAPSEIISRFKLFLIDVPFADTIIHDLRKVTPNVNVHSTSIFTSNERGDARILTGWVVIRIAVSRFEQQKRSFEYMSYFNDILRFCDGGIIHFDIPDATFLMHVVTSLQCTPNRRVKVLSYFASQSPFSLTLHFYRDTTDPLLPVANIGHWVTRHQMKRYAYTDRDSTIPLRHEVIPALSTVMSRMTAEYSFVCQKSDLPVCLSALSTISNYARVATWTDYRGIAHWSGSAVIDPLRLLDSSRTGVLATNVPIEPLIAPSHGVPRLERSTYRVVDAFHLCSLIGPIFIQREFNIWTASRTSERTRHVIDVGGRDGAFRGLFPHAMYTVIDPAPAPQHMISNYISEPWDFNDFQGSLDRIMDTLGIIDPQDVFLVFSHVFISALNRPAAHVNALEQLGALQCSSVVSTQTSGSSASTLYSSYVNHNPFLEIRMENAAYLTRTYPSPYPLPTRAEMNEAILNNARSRLHQTSAAEILDLAMRFGYAPSYEAIVTLPALCDQHVVYAIQ.

It localises to the virion. It catalyses the reaction a 5'-end diphospho-ribonucleoside in mRNA + GTP + H(+) = a 5'-end (5'-triphosphoguanosine)-ribonucleoside in mRNA + diphosphate. It carries out the reaction a 5'-end (5'-triphosphoguanosine)-ribonucleoside in mRNA + S-adenosyl-L-methionine = a 5'-end (N(7)-methyl 5'-triphosphoguanosine)-ribonucleoside in mRNA + S-adenosyl-L-homocysteine. Outer capsid protein involved in mRNA capping. Catalyzes the last 3 enzymatic activities for formation of the 5' cap structure on the viral plus-strand transcripts, namely the RNA guanylyltransferase, RNA-7N- and RNA-2'O-methyltransferase activities. In Cryphonectria parasitica mycoreovirus 1 (strain 9B21) (CpMYRV-1), this protein is Outer capsid protein VP3 (S3).